The sequence spans 316 residues: Geminin coiled-coil domain-containing protein 1 (316 aa).

Residues 82–117 adopt a coiled-coil conformation; that stretch reads QISANKQLQDTLLQKEEELSRLHEENNKLKEFLNSA. Composition is skewed to polar residues over residues 134-155 and 207-234; these read GQSSFCTNPNSRVPFSSNSTPG and MSLQPKQDSPSSGYSSAHLTPGHSQAAT. 2 disordered regions span residues 134–160 and 207–269; these read GQSSFCTNPNSRVPFSSNSTPGSKAKR and MSLQ…DVAP. Position 153 is a phosphothreonine; by cdk2 (threonine 153). Residues 235–252 show a composition bias toward low complexity; sequence SCSLSPSQCSSASLPESE. The segment covering 253–262 has biased composition (polar residues); sequence TASPLSSPTY.

The protein belongs to the GEMC1 family. As to quaternary structure, interacts with topbp1. Interacts with Cdc45l and the kinase cdk2-cyclin-E (the interaction is direct). Highly phosphorylated by cdk2; stimulates initiation of DNA replication. As to expression, expressed in most tissues. Enriched in proliferating cells from skin and gut.

The protein resides in the nucleus. Functionally, regulator of DNA replication. Promotes initiation of chromosomal DNA replication by mediating topbp1- and cdk2-dependent recruitment of cdc45l onto replication origins. The chain is Geminin coiled-coil domain-containing protein 1 (gmnc) from Xenopus laevis (African clawed frog).